A 440-amino-acid polypeptide reads, in one-letter code: Xaa-Pro dipeptidase (440 aa).

Mn(2+) is bound by residues Asp-244, Asp-255, His-336, Glu-381, and Glu-420.

The protein belongs to the peptidase M24B family. The cofactor is Mn(2+). Post-translationally, the N-terminus is blocked.

The enzyme catalyses Xaa-L-Pro dipeptide + H2O = an L-alpha-amino acid + L-proline. It carries out the reaction diisopropyl fluorophosphate + H2O = diisopropyl phosphate + fluoride + 2 H(+). Its function is as follows. Splits dipeptides with a prolyl or hydroxyprolyl residue in the C-terminal position and a nonpolar amino acid at the N-terminal position. Also catalyzes the hydrolysis of toxic organophosphorus cholinesterase-inhibiting compounds including nerve gases such as diisopropylfluorophosphate (DFP), O-isopropyl methylphosphonofluoridate (sarin), O-pinacolyl methylphosphonofluoridate (soman), and O-cyclohexyl methylphosphonofluoridate. The polypeptide is Xaa-Pro dipeptidase (pepQ) (Pseudoalteromonas haloplanktis (Alteromonas haloplanktis)).